The primary structure comprises 79 residues: Small ribosomal subunit protein uS17 (79 aa).

It belongs to the universal ribosomal protein uS17 family. As to quaternary structure, part of the 30S ribosomal subunit.

Functionally, one of the primary rRNA binding proteins, it binds specifically to the 5'-end of 16S ribosomal RNA. This is Small ribosomal subunit protein uS17 from Rhizobium etli (strain CIAT 652).